A 481-amino-acid chain; its full sequence is FAD-linked oxidoreductase afoF (481 aa).

The N-terminal stretch at 1–16 (MRFLLQSITLVAAARA) is a signal peptide. An FAD-binding PCMH-type domain is found at 52–227 (SEWRPPTWTG…TAATFKMFDQ (176 aa)). Residue asparagine 82 is glycosylated (N-linked (GlcNAc...) asparagine). Histidine 92 is subject to Pros-8alpha-FAD histidine. 6 N-linked (GlcNAc...) asparagine glycosylation sites follow: asparagine 196, asparagine 241, asparagine 276, asparagine 309, asparagine 312, and asparagine 376.

The protein belongs to the oxygen-dependent FAD-linked oxidoreductase family. Requires FAD as cofactor.

In terms of biological role, FAD-linked oxidoreductase; part of the gene cluster that mediates the biosynthesis of asperfuranone, a probable antitumor agent. The polyketide synthase afoG is responsible for producing the 3,5-dimethyloctadienone moiety from acetyl-CoA, three malonyl-CoA, and two S-adenosyl methionines (SAM). The 3,5-dimethyloctadienone moiety is then loaded onto the SAT domain of afoE and extended with four malonyl-CoA and one SAM, which leads to the formation of 2,4-dihydroxy-6-(5,7-dimethyl-2-oxo-trans-3-trans-5-nonadienyl)-3-methylbenzaldehyde (compound 2) after reductive release and aldol condensation. AfoD is the next enzyme in the biosynthesis sequence and hydroxylates the side chain at the benzylic position of compound 2. After benzylic hydroxylation, a furan ring is formed after five-member ring hemiacetal formation and water elimination. AfoF and afoC are proposed to oxidize the R-diketone proton and to reduce the unconjugated carbonyl group, respectively, to generate asperfuranone. Since no intermediates could be isolated from afoF and afoC deletants, the sequence of these two enzymes is not fully understood. Moreover, since afoC deletant still produces a small amount of asperfuranone, other endogenous oxidoreductases might catalyze the same reaction with much less efficiency. In Emericella nidulans (strain FGSC A4 / ATCC 38163 / CBS 112.46 / NRRL 194 / M139) (Aspergillus nidulans), this protein is FAD-linked oxidoreductase afoF.